A 256-amino-acid chain; its full sequence is Ribonuclease 3 (256 aa).

The RNase III domain maps to 3-125 (LDALQQRLGY…IVGAVFLDAG (123 aa)). Glu-38 contacts Mg(2+). Residue Asp-42 is part of the active site. Positions 111 and 114 each coordinate Mg(2+). Glu-114 is a catalytic residue. Positions 152 to 222 (DAKTLLQEYL…AKLALDEVQK (71 aa)) constitute a DRBM domain. Positions 230-256 (RSRAERTGKTRKQPVPQDPQLSLRLKE) are disordered.

It belongs to the ribonuclease III family. Homodimer. Mg(2+) is required as a cofactor.

The protein localises to the cytoplasm. It catalyses the reaction Endonucleolytic cleavage to 5'-phosphomonoester.. Digests double-stranded RNA. Involved in the processing of primary rRNA transcript to yield the immediate precursors to the large and small rRNAs (23S and 16S). Processes some mRNAs, and tRNAs when they are encoded in the rRNA operon. Processes pre-crRNA and tracrRNA of type II CRISPR loci if present in the organism. The protein is Ribonuclease 3 of Cupriavidus necator (strain ATCC 17699 / DSM 428 / KCTC 22496 / NCIMB 10442 / H16 / Stanier 337) (Ralstonia eutropha).